Consider the following 313-residue polypeptide: Olfactory receptor 5H1 (313 aa).

Residues 1 to 28 lie on the Extracellular side of the membrane; the sequence is MEEENATLLTEFVLTGFLYQPQWKIPLF. N5 carries an N-linked (GlcNAc...) asparagine glycan. The helical transmembrane segment at 29 to 49 threads the bilayer; sequence LAFLVIYLITIMGNLGLIAVI. Over 50–56 the chain is Cytoplasmic; that stretch reads WKDPHLH. Residues 57–77 traverse the membrane as a helical segment; the sequence is IPMYLLLGNLAFVDAWISSTV. Residues 78-98 lie on the Extracellular side of the membrane; the sequence is TPKMLNNFLAKSKMISLSECK. An intrachain disulfide couples C97 to C179. Residues 99 to 119 traverse the membrane as a helical segment; the sequence is IQFFSFAISVTTECFLLATMA. Topologically, residues 120–143 are cytoplasmic; that stretch reads YDRYVAICKPLLYPAIMTNGLCIR. The helical transmembrane segment at 144–164 threads the bilayer; the sequence is LLILSYVGGILHALIHEGFLF. Over 165–195 the chain is Extracellular; it reads RLTFCNSNIVHHIYCDTIPLSKISCTDSSIN. Residues 196 to 216 traverse the membrane as a helical segment; it reads FLMVFIFSGSIQVFSIVTILV. The Cytoplasmic portion of the chain corresponds to 217 to 240; that stretch reads SYTFVLFAILKKKSDKGVRKAFST. Residues 241-261 traverse the membrane as a helical segment; sequence CGAHLFSVSLYYGPLLFIYVG. At 262–271 the chain is on the extracellular side; it reads PASPQADDQD. The chain crosses the membrane as a helical span at residues 272 to 292; the sequence is MVEPLFYTVIIPLLNPIIYSL. The Cytoplasmic segment spans residues 293–313; that stretch reads RNKQVTVSFTKMLKKHVKVSY.

This sequence belongs to the G-protein coupled receptor 1 family.

The protein localises to the cell membrane. Odorant receptor. The sequence is that of Olfactory receptor 5H1 (OR5H1) from Homo sapiens (Human).